We begin with the raw amino-acid sequence, 460 residues long: Arginine decarboxylase (460 aa).

At Lys-226 the chain carries N6-(pyridoxal phosphate)lysine.

It belongs to the Orn/Lys/Arg decarboxylase class-I family. Pyridoxal 5'-phosphate is required as a cofactor.

The protein localises to the cytoplasm. It carries out the reaction L-arginine + H(+) = agmatine + CO2. It participates in amine and polyamine biosynthesis; agmatine biosynthesis; agmatine from L-arginine: step 1/1. In terms of biological role, catalyzes the formation of agmatine from arginine. The protein is Arginine decarboxylase (speA) of Bacillus cereus (strain ATCC 14579 / DSM 31 / CCUG 7414 / JCM 2152 / NBRC 15305 / NCIMB 9373 / NCTC 2599 / NRRL B-3711).